Here is a 353-residue protein sequence, read N- to C-terminus: Variable large protein 17 (353 aa).

An N-terminal signal peptide occupies residues 1-18 (MRKRISAIIMTLFMVLVS). C19 carries the N-palmitoyl cysteine lipid modification. C19 is lipidated: S-diacylglycerol cysteine. Residues 332 to 353 (EDKSVEATNTAEATTSGQQAKN) form a disordered region. Residues 337–353 (EATNTAEATTSGQQAKN) show a composition bias toward polar residues.

Belongs to the variable large protein (Vlp) family. Delta subfamily.

It is found in the cell outer membrane. The Vlp and Vsp proteins are antigenically distinct proteins, only one vlp or vsp gene is transcriptionally active at any one time. Switching between these genes is a mechanism of host immune response evasion. This Borrelia hermsii protein is Variable large protein 17.